Reading from the N-terminus, the 317-residue chain is Cytochrome f (317 aa).

Positions 1–34 (MKGLKNQIMKKTSLFICTLLFILSIVFYPKITFA) are cleaved as a signal peptide. Heme-binding residues include tyrosine 35, cysteine 55, cysteine 58, and histidine 59. A helical membrane pass occupies residues 284-304 (VIGLIAFFIGVGLTQILLVLK).

It belongs to the cytochrome f family. In terms of assembly, the 4 large subunits of the cytochrome b6-f complex are cytochrome b6, subunit IV (17 kDa polypeptide, PetD), cytochrome f and the Rieske protein, while the 4 small subunits are PetG, PetL, PetM and PetN. The complex functions as a dimer. It depends on heme as a cofactor.

It localises to the cellular thylakoid membrane. Its function is as follows. Component of the cytochrome b6-f complex, which mediates electron transfer between photosystem II (PSII) and photosystem I (PSI), cyclic electron flow around PSI, and state transitions. The polypeptide is Cytochrome f (Prochlorococcus marinus (strain MIT 9215)).